The sequence spans 556 residues: Jerky protein homolog (556 aa).

In terms of domain architecture, HTH psq-type spans 11 to 62; it reads RGEKRKRVVLTLKEKIDICTRLEKGESRKALMQEYNVGMSTLYDIRAHKAQL. 2 DNA-binding regions (H-T-H motif) span residues 38-58 and 110-142; these read RKALMQEYNVGMSTLYDIRAH and PMLIEKAKDFYEQMQLTEPCVFSGGWLWRFKAR. The 73-residue stretch at 77–149 folds into the HTH CENPB-type domain; sequence QRRTLHTPKL…KARHGIKKLD (73 aa). One can recognise a DDE-1 domain in the interval 213 to 382; sequence KDRLTVLMCA…VPSHVFRRAW (170 aa). S414 is subject to Phosphoserine. Positions 439–482 are disordered; that stretch reads SWGVAGREAEGGRPPAATSPAEVVWSSEKTPKADQDGRGDPGEG. A compositionally biased stretch (basic and acidic residues) spans 467 to 479; the sequence is KTPKADQDGRGDP.

The protein belongs to the tigger transposable element derived protein family. In terms of tissue distribution, expressed ubiquitously.

Its subcellular location is the nucleus. May bind DNA. This chain is Jerky protein homolog, found in Homo sapiens (Human).